Consider the following 247-residue polypeptide: Chromosome partition protein MukE (247 aa).

The disordered stretch occupies residues 213–247; the sequence is AQSLQEEKNGLKDNMDQSAVENEQYFENEENEGIA. Basic and acidic residues predominate over residues 217 to 227; that stretch reads QEEKNGLKDNM. The segment covering 236–247 has biased composition (acidic residues); the sequence is QYFENEENEGIA.

Belongs to the MukE family. In terms of assembly, interacts, and probably forms a ternary complex, with MukF and MukB. The complex formation is stimulated by calcium or magnesium.

The protein localises to the cytoplasm. It localises to the nucleoid. Its function is as follows. Involved in chromosome condensation, segregation and cell cycle progression. May participate in facilitating chromosome segregation by condensation DNA from both sides of a centrally located replisome during cell division. Probably acts via its interaction with MukB and MukF. This is Chromosome partition protein MukE from Histophilus somni (strain 2336) (Haemophilus somnus).